Reading from the N-terminus, the 928-residue chain is DENN domain-containing protein 2C (928 aa).

Disordered stretches follow at residues 67–105 and 245–266; these read KSKN…YDDT and QSSL…IRGR. Residues 85–105 are compositionally biased toward basic and acidic residues; sequence ENTKSHDQSENENKKHEYDDT. S271 is subject to Phosphoserine. Positions 428–456 are disordered; that stretch reads KLHSYTGKELPPTKGETSGNESDAEYLPK. In terms of domain architecture, uDENN spans 492-641; it reads ELFVVVSLQK…PFPAPGRTIT (150 aa). One can recognise a cDENN domain in the interval 663–796; sequence RLEHVDFKCL…LQAALMQILE (134 aa). Residues 798–888 form the dDENN domain; the sequence is RNEILTQEQN…QDRELRKSGV (91 aa).

Guanine nucleotide exchange factor (GEF) which may activate RAB9A and RAB9B. Promotes the exchange of GDP to GTP, converting inactive GDP-bound Rab proteins into their active GTP-bound form. In Homo sapiens (Human), this protein is DENN domain-containing protein 2C (DENND2C).